The sequence spans 339 residues: MISFNNVSKVYESGGQSVHAVEDVTLSVEKGEIFGIIGFSGAGKSTLLRLVNMLERPTAGTISIDDKDITSLSTKELRKLRQRIGMIFQSFNLFNSRTVFGNIAYPLKLAKVPKNEIKERVNELLKFVGLEDKANNYPEQLSGGQKQRVGIARALATSPDILICDEATSALDPETTTEILNLLKKVNREYNLTILLITHEMHVVKEICHRVAVMEKGKVIEEGKLFDVFTQPKTTTTQNFVRSVINDHLPESVLAKIQNGGQIYRLTFTGEETGQPVLSYIAKNYNVDVNVLYGNIIELQNVLFGNLLVELQGEQREIQKALQHLRLQVQLKEVEAHAS.

The ABC transporter domain occupies 2–241 (ISFNNVSKVY…PKTTTTQNFV (240 aa)). ATP is bound at residue 38–45 (GFSGAGKS).

Belongs to the ABC transporter superfamily. Methionine importer (TC 3.A.1.24) family. As to quaternary structure, the complex is composed of two ATP-binding proteins (MetN), two transmembrane proteins (MetI) and a solute-binding protein (MetQ).

It is found in the cell membrane. The enzyme catalyses L-methionine(out) + ATP + H2O = L-methionine(in) + ADP + phosphate + H(+). It carries out the reaction D-methionine(out) + ATP + H2O = D-methionine(in) + ADP + phosphate + H(+). In terms of biological role, part of the ABC transporter complex MetNIQ involved in methionine import. Responsible for energy coupling to the transport system. This Bacillus anthracis protein is Methionine import ATP-binding protein MetN 2.